We begin with the raw amino-acid sequence, 977 residues long: P3N-PIPO polyprotein (977 aa).

The Peptidase S30 domain maps to 132–274; that stretch reads TCSSSGLDNL…QSITLRATHF (143 aa). Residues His-183, Asp-192, and Ser-225 each act as for P1 proteinase activity in the active site. An Involved in interaction with stylet and aphid transmission motif is present at residues 325 to 328; sequence KITC. The Involved in virions binding and aphid transmission motif lies at 583 to 585; it reads PTK. The Peptidase C6 domain maps to 609–731; it reads MYIAKEGYCY…ESPMAQYKVG (123 aa). Active-site for helper component proteinase activity residues include Cys-617 and His-690.

The protein belongs to the potyviridae P3N-PIPO polyprotein family. In terms of assembly, interacts (via PIPO domain) with host PCaP1 protein; this interaction may help to anchor the movement complex to the plasma membrane from which the complex could move to the plasmodesmata. Potyviral RNA is expressed as two polyproteins which undergo post-translational proteolytic processing. Genome polyprotein is processed by NIa-pro, P1 and HC-pro proteinases resulting in the production of at least ten individual proteins. P3N-PIPO is cleaved by P1 and HC-pro proteinases resulting in the production of three individual proteins. The P1 proteinase and the HC-pro cleave only their respective C-termini autocatalytically.

The protein localises to the host cell junction. Its subcellular location is the host plasmodesma. It carries out the reaction Hydrolyzes a Gly-|-Gly bond at its own C-terminus, commonly in the sequence -Tyr-Xaa-Val-Gly-|-Gly, in the processing of the potyviral polyprotein.. In terms of biological role, required for aphid transmission and also has proteolytic activity. Only cleaves a Gly-Gly dipeptide at its own C-terminus. Interacts with virions and aphid stylets. Acts as a suppressor of RNA-mediated gene silencing, also known as post-transcriptional gene silencing (PTGS), a mechanism of plant viral defense that limits the accumulation of viral RNAs. May have RNA-binding activity. Its function is as follows. Allows efficient cell to cell propagation, by bypassing the host cell wall barrier. Transports viral genome to neighboring plant cells directly through plasmosdesmata, without any budding. This chain is P3N-PIPO polyprotein, found in Nicotiana tabacum (Common tobacco).